Here is a 195-residue protein sequence, read N- to C-terminus: FMN-dependent NADH:quinone oxidoreductase (195 aa).

FMN contacts are provided by residues Ser10, 16 to 18, and 91 to 94; these read SQS and MYNF.

It belongs to the azoreductase type 1 family. In terms of assembly, homodimer. The cofactor is FMN.

The enzyme catalyses 2 a quinone + NADH + H(+) = 2 a 1,4-benzosemiquinone + NAD(+). It catalyses the reaction N,N-dimethyl-1,4-phenylenediamine + anthranilate + 2 NAD(+) = 2-(4-dimethylaminophenyl)diazenylbenzoate + 2 NADH + 2 H(+). Its function is as follows. Quinone reductase that provides resistance to thiol-specific stress caused by electrophilic quinones. Also exhibits azoreductase activity. Catalyzes the reductive cleavage of the azo bond in aromatic azo compounds to the corresponding amines. In Aeromonas salmonicida (strain A449), this protein is FMN-dependent NADH:quinone oxidoreductase.